Consider the following 86-residue polypeptide: Cell division topological specificity factor (86 aa).

It belongs to the MinE family.

Prevents the cell division inhibition by proteins MinC and MinD at internal division sites while permitting inhibition at polar sites. This ensures cell division at the proper site by restricting the formation of a division septum at the midpoint of the long axis of the cell. This is Cell division topological specificity factor from Albidiferax ferrireducens (strain ATCC BAA-621 / DSM 15236 / T118) (Rhodoferax ferrireducens).